Consider the following 354-residue polypeptide: Selenide, water dikinase (354 aa).

C23 is a catalytic residue. ATP-binding positions include K26 and 54–56; that span reads TSD. D57 lines the Mg(2+) pocket. Residues D74, D97, and 145-147 contribute to the ATP site; that span reads GHS. D97 provides a ligand contact to Mg(2+). D233 contacts Mg(2+).

This sequence belongs to the selenophosphate synthase 1 family. Class I subfamily. Homodimer. Mg(2+) serves as cofactor.

The catalysed reaction is hydrogenselenide + ATP + H2O = selenophosphate + AMP + phosphate + 2 H(+). In terms of biological role, synthesizes selenophosphate from selenide and ATP. The protein is Selenide, water dikinase of Burkholderia cenocepacia (strain ATCC BAA-245 / DSM 16553 / LMG 16656 / NCTC 13227 / J2315 / CF5610) (Burkholderia cepacia (strain J2315)).